We begin with the raw amino-acid sequence, 130 residues long: MSATQNYGTGRRKTATARVFLRPGTGNISINNRSLDNFFGRETARMVVRQPLELTETVEKFDIYVTVIGGGVSGQAGAIRHGITRALMDYDETLRSALRKAGFVTRDAREVERKKVGLRKARKRPQYSKR.

It belongs to the universal ribosomal protein uS9 family.

This Pseudomonas fluorescens (strain ATCC BAA-477 / NRRL B-23932 / Pf-5) protein is Small ribosomal subunit protein uS9.